We begin with the raw amino-acid sequence, 937 residues long: C-1-tetrahydrofolate synthase, cytoplasmic (937 aa).

Residues 1-309 (MALLLEGTSL…TLLPLKLQTP (309 aa)) form a methylenetetrahydrofolate dehydrogenase and cyclohydrolase region. Residues 50 to 54 (YVRMK) and 97 to 99 (VQL) each bind substrate. NADP(+) contacts are provided by residues 168-170 (GRS) and Ser193. Position 268–272 (268–272 (PGSVG)) interacts with substrate. The interval 310-937 (VPSDIEIARS…AENGDIVGLS (628 aa)) is formyltetrahydrofolate synthetase. 374-381 (TPFGEGKS) contributes to the ATP binding site.

In the N-terminal section; belongs to the tetrahydrofolate dehydrogenase/cyclohydrolase family. It in the C-terminal section; belongs to the formate--tetrahydrofolate ligase family. In terms of assembly, homodimer.

It is found in the cytoplasm. It catalyses the reaction (6R)-5,10-methylene-5,6,7,8-tetrahydrofolate + NADP(+) = (6R)-5,10-methenyltetrahydrofolate + NADPH. It carries out the reaction (6R)-5,10-methenyltetrahydrofolate + H2O = (6R)-10-formyltetrahydrofolate + H(+). The catalysed reaction is (6S)-5,6,7,8-tetrahydrofolate + formate + ATP = (6R)-10-formyltetrahydrofolate + ADP + phosphate. It functions in the pathway one-carbon metabolism; tetrahydrofolate interconversion. This chain is C-1-tetrahydrofolate synthase, cytoplasmic, found in Schizosaccharomyces pombe (strain 972 / ATCC 24843) (Fission yeast).